The chain runs to 261 residues: Cyclin-J18-like (261 aa).

It belongs to the cyclin family.

In Oryza sativa subsp. japonica (Rice), this protein is Cyclin-J18-like.